The chain runs to 435 residues: Keratin, type I cytoskeletal 18 (435 aa).

Residues 2–84 are head; that stretch reads SYRPGSYSVS…SVSGSGLVGN (83 aa). Residues 85–120 are coil 1A; it reads EKETMIGLNDRLAAYLETVRNLEQANSKLEFQIREA. An IF rod domain is found at 85-396; the sequence is EKETMIGLND…RLLDGEDFRL (312 aa). A linker 1 region spans residues 121 to 137; the sequence is LEKKGPTTRDLSPFEKT. The interval 138–229 is coil 1B; that stretch reads LEDLRKKVYD…QNHNQEVNDL (92 aa). The segment at 230–253 is linker 12; that stretch reads RNQIAQSGVQVDVDAPKGQDLAQV. The tract at residues 254–391 is coil 2; it reads LAEVRAQYES…IATYRRLLDG (138 aa). The interval 392–435 is tail; it reads EDFRLQDALVDQSSTKSIKKVTVTQTLVDGKVVSESTNTKEIGK.

The protein belongs to the intermediate filament family. As to quaternary structure, heterotetramer of two type I and two type II keratins. Keratin-18 associates with keratin-8. Phosphorylated. Post-translationally, proteolytically cleaved by caspases during epithelial cell apoptosis.

In terms of biological role, when phosphorylated, plays a role in filament reorganization. In Acipenser baerii (Siberian sturgeon), this protein is Keratin, type I cytoskeletal 18.